A 134-amino-acid polypeptide reads, in one-letter code: MHIALIAHDEKKDLMEEFAIAYKHLLEPHQLYATGTTGLRIIEATGLSVHRFKSGPLGGDQQIGARISENKMDLVIFLRDPLTAQPHEPDVTALIRLCDVYEIPLATNIGTAEILIRGLESGFLDWRDLRRNDE.

The MGS-like domain maps to 1–134 (MHIALIAHDE…DWRDLRRNDE (134 aa)). Substrate-binding positions include histidine 8, lysine 12, 34–37 (TGTT), and 54–55 (SG). Aspartate 60 (proton donor/acceptor) is an active-site residue. A substrate-binding site is contributed by histidine 87.

It belongs to the methylglyoxal synthase family.

The catalysed reaction is dihydroxyacetone phosphate = methylglyoxal + phosphate. In terms of biological role, catalyzes the formation of methylglyoxal from dihydroxyacetone phosphate. The polypeptide is Methylglyoxal synthase (Listeria welshimeri serovar 6b (strain ATCC 35897 / DSM 20650 / CCUG 15529 / CIP 8149 / NCTC 11857 / SLCC 5334 / V8)).